Consider the following 246-residue polypeptide: Probable septum site-determining protein MinC (246 aa).

Belongs to the MinC family. Interacts with MinD and FtsZ.

In terms of biological role, cell division inhibitor that blocks the formation of polar Z ring septums. Rapidly oscillates between the poles of the cell to destabilize FtsZ filaments that have formed before they mature into polar Z rings. Prevents FtsZ polymerization. The chain is Probable septum site-determining protein MinC from Pseudomonas syringae pv. syringae (strain B728a).